We begin with the raw amino-acid sequence, 469 residues long: Phenylalanine--tRNA ligase alpha subunit (469 aa).

L-phenylalanine contacts are provided by residues Thr309, 348–350 (QLD), and Phe388. Mg(2+) is bound at residue Glu390.

This sequence belongs to the class-II aminoacyl-tRNA synthetase family. Phe-tRNA synthetase alpha subunit type 2 subfamily. In terms of assembly, tetramer of two alpha and two beta subunits. The cofactor is Mg(2+).

The protein localises to the cytoplasm. It carries out the reaction tRNA(Phe) + L-phenylalanine + ATP = L-phenylalanyl-tRNA(Phe) + AMP + diphosphate + H(+). In Sulfurisphaera tokodaii (strain DSM 16993 / JCM 10545 / NBRC 100140 / 7) (Sulfolobus tokodaii), this protein is Phenylalanine--tRNA ligase alpha subunit.